The chain runs to 131 residues: Methylglyoxal synthase (131 aa).

The 131-residue stretch at 1–131 folds into the MGS-like domain; it reads MKIALIAHDK…GDLDYRKLRK (131 aa). Substrate is bound by residues histidine 8, lysine 12, 34–37, and 54–55; these read TGTT and SG. The active-site Proton donor/acceptor is aspartate 60. Residue histidine 87 coordinates substrate.

This sequence belongs to the methylglyoxal synthase family.

The enzyme catalyses dihydroxyacetone phosphate = methylglyoxal + phosphate. Catalyzes the formation of methylglyoxal from dihydroxyacetone phosphate. The polypeptide is Methylglyoxal synthase (Bacillus cereus (strain ATCC 10987 / NRS 248)).